The chain runs to 349 residues: Nicotinate-nucleotide--dimethylbenzimidazole phosphoribosyltransferase (349 aa).

The active-site Proton acceptor is Glu-318.

It belongs to the CobT family.

It catalyses the reaction 5,6-dimethylbenzimidazole + nicotinate beta-D-ribonucleotide = alpha-ribazole 5'-phosphate + nicotinate + H(+). It participates in nucleoside biosynthesis; alpha-ribazole biosynthesis; alpha-ribazole from 5,6-dimethylbenzimidazole: step 1/2. In terms of biological role, catalyzes the synthesis of alpha-ribazole-5'-phosphate from nicotinate mononucleotide (NAMN) and 5,6-dimethylbenzimidazole (DMB). This Alkaliphilus metalliredigens (strain QYMF) protein is Nicotinate-nucleotide--dimethylbenzimidazole phosphoribosyltransferase.